The following is a 158-amino-acid chain: Regulator of sigma D (158 aa).

It belongs to the Rsd/AlgQ family. As to quaternary structure, interacts with RpoD.

The protein resides in the cytoplasm. In terms of biological role, binds RpoD and negatively regulates RpoD-mediated transcription activation by preventing the interaction between the primary sigma factor RpoD with the catalytic core of the RNA polymerase and with promoter DNA. May be involved in replacement of the RNA polymerase sigma subunit from RpoD to RpoS during the transition from exponential growth to the stationary phase. In Escherichia coli (strain UTI89 / UPEC), this protein is Regulator of sigma D.